The sequence spans 340 residues: Phosphoribosylformylglycinamidine cyclo-ligase (340 aa).

This sequence belongs to the AIR synthase family.

It localises to the cytoplasm. The enzyme catalyses 2-formamido-N(1)-(5-O-phospho-beta-D-ribosyl)acetamidine + ATP = 5-amino-1-(5-phospho-beta-D-ribosyl)imidazole + ADP + phosphate + H(+). It functions in the pathway purine metabolism; IMP biosynthesis via de novo pathway; 5-amino-1-(5-phospho-D-ribosyl)imidazole from N(2)-formyl-N(1)-(5-phospho-D-ribosyl)glycinamide: step 2/2. This Crocosphaera subtropica (strain ATCC 51142 / BH68) (Cyanothece sp. (strain ATCC 51142)) protein is Phosphoribosylformylglycinamidine cyclo-ligase.